Consider the following 259-residue polypeptide: Acyl-[acyl-carrier-protein]--UDP-N-acetylglucosamine O-acyltransferase (259 aa).

The protein belongs to the transferase hexapeptide repeat family. LpxA subfamily. In terms of assembly, homotrimer.

The protein localises to the cytoplasm. It catalyses the reaction a (3R)-hydroxyacyl-[ACP] + UDP-N-acetyl-alpha-D-glucosamine = a UDP-3-O-[(3R)-3-hydroxyacyl]-N-acetyl-alpha-D-glucosamine + holo-[ACP]. It participates in glycolipid biosynthesis; lipid IV(A) biosynthesis; lipid IV(A) from (3R)-3-hydroxytetradecanoyl-[acyl-carrier-protein] and UDP-N-acetyl-alpha-D-glucosamine: step 1/6. Functionally, involved in the biosynthesis of lipid A, a phosphorylated glycolipid that anchors the lipopolysaccharide to the outer membrane of the cell. This is Acyl-[acyl-carrier-protein]--UDP-N-acetylglucosamine O-acyltransferase from Psychrobacter arcticus (strain DSM 17307 / VKM B-2377 / 273-4).